The primary structure comprises 301 residues: Ribosomal protein L11 methyltransferase (301 aa).

S-adenosyl-L-methionine contacts are provided by threonine 146, glycine 167, aspartate 189, and asparagine 234.

It belongs to the methyltransferase superfamily. PrmA family.

The protein localises to the cytoplasm. It catalyses the reaction L-lysyl-[protein] + 3 S-adenosyl-L-methionine = N(6),N(6),N(6)-trimethyl-L-lysyl-[protein] + 3 S-adenosyl-L-homocysteine + 3 H(+). Methylates ribosomal protein L11. In Acinetobacter baumannii (strain AB307-0294), this protein is Ribosomal protein L11 methyltransferase.